The chain runs to 713 residues: Phosphoribosylformylglycinamidine synthase subunit PurL (713 aa).

Residues 1–17 are compositionally biased toward basic and acidic residues; it reads MSLSPSDRELVTEELGR. The interval 1-20 is disordered; that stretch reads MSLSPSDRELVTEELGREPT. His-34 is an active-site residue. Residue Tyr-37 coordinates ATP. Glu-85 lines the Mg(2+) pocket. Substrate contacts are provided by residues 86 to 89 and Arg-108; that span reads SHNH. The active-site Proton acceptor is His-87. Asp-109 serves as a coordination point for Mg(2+). Position 233 (Gln-233) interacts with substrate. Asp-261 serves as a coordination point for Mg(2+). Substrate is bound at residue 305–307; the sequence is ESQ. ATP is bound by residues Asp-480 and Gly-517. Asn-518 contributes to the Mg(2+) binding site. Ser-520 provides a ligand contact to substrate.

This sequence belongs to the FGAMS family. As to quaternary structure, monomer. Part of the FGAM synthase complex composed of 1 PurL, 1 PurQ and 2 PurS subunits.

The protein localises to the cytoplasm. It carries out the reaction N(2)-formyl-N(1)-(5-phospho-beta-D-ribosyl)glycinamide + L-glutamine + ATP + H2O = 2-formamido-N(1)-(5-O-phospho-beta-D-ribosyl)acetamidine + L-glutamate + ADP + phosphate + H(+). It functions in the pathway purine metabolism; IMP biosynthesis via de novo pathway; 5-amino-1-(5-phospho-D-ribosyl)imidazole from N(2)-formyl-N(1)-(5-phospho-D-ribosyl)glycinamide: step 1/2. Part of the phosphoribosylformylglycinamidine synthase complex involved in the purines biosynthetic pathway. Catalyzes the ATP-dependent conversion of formylglycinamide ribonucleotide (FGAR) and glutamine to yield formylglycinamidine ribonucleotide (FGAM) and glutamate. The FGAM synthase complex is composed of three subunits. PurQ produces an ammonia molecule by converting glutamine to glutamate. PurL transfers the ammonia molecule to FGAR to form FGAM in an ATP-dependent manner. PurS interacts with PurQ and PurL and is thought to assist in the transfer of the ammonia molecule from PurQ to PurL. In Natronomonas pharaonis (strain ATCC 35678 / DSM 2160 / CIP 103997 / JCM 8858 / NBRC 14720 / NCIMB 2260 / Gabara) (Halobacterium pharaonis), this protein is Phosphoribosylformylglycinamidine synthase subunit PurL.